Here is a 199-residue protein sequence, read N- to C-terminus: Peptidyl-tRNA hydrolase (199 aa).

Position 15 (Y15) interacts with tRNA. H20 serves as the catalytic Proton acceptor. TRNA-binding residues include F66, N68, and N114.

This sequence belongs to the PTH family. Monomer.

It localises to the cytoplasm. The catalysed reaction is an N-acyl-L-alpha-aminoacyl-tRNA + H2O = an N-acyl-L-amino acid + a tRNA + H(+). In terms of biological role, hydrolyzes ribosome-free peptidyl-tRNAs (with 1 or more amino acids incorporated), which drop off the ribosome during protein synthesis, or as a result of ribosome stalling. Catalyzes the release of premature peptidyl moieties from peptidyl-tRNA molecules trapped in stalled 50S ribosomal subunits, and thus maintains levels of free tRNAs and 50S ribosomes. The protein is Peptidyl-tRNA hydrolase of Cupriavidus pinatubonensis (strain JMP 134 / LMG 1197) (Cupriavidus necator (strain JMP 134)).